Consider the following 400-residue polypeptide: Cytohesin-3 (400 aa).

A coiled-coil region spans residues 14-61; it reads EDLSLEEREELLDIRRRKKELIDDIERLKYEIAEVMTEIDNLTSVEES. Residues 77–206 form the SEC7 domain; the sequence is FNMDPKKGIQ…IIMLNTSLHN (130 aa). Residues 265-381 enclose the PH domain; it reads PDREGWLLKL…WMKSIKASIS (117 aa). A 1,2-diacyl-sn-glycero-3-phospho-(1D-myo-inositol-3,4,5-trisphosphate) contacts are provided by residues 273–281, R285, Y296, R306, and N355; that span reads KLGGGRVKT. A C-terminal autoinhibitory region region spans residues 392 to 400; that stretch reads RKRRIANKK.

Interacts with TAMALIN. As to expression, present in all tissues tested, with highest protein levels in brain and adrenal.

It localises to the cytoplasm. The protein resides in the cytosol. It is found in the cell membrane. Its function is as follows. Promotes guanine-nucleotide exchange on ARF1. Promotes the activation of ARF factors through replacement of GDP with GTP. This chain is Cytohesin-3 (Cyth3), found in Rattus norvegicus (Rat).